The sequence spans 413 residues: Acyltransferase mokF (413 aa).

Arg93 is a monacolin J binding site. Residue Ser96 is the Acyl-ester intermediate of the active site. Arg193, Tyr208, and Tyr278 together coordinate monacolin J. Residue Gly386 coordinates 2-methylbutanoate.

The protein belongs to the class-A beta-lactamase family.

The catalysed reaction is monacolin J carboxylate + (S)-2-methylbutanoyl-[2-methylbutanoate polyketide synthase] = lovastatin carboxylate + holo-[2-methylbutanoate polyketide synthase]. It participates in polyketide biosynthesis; lovastatin biosynthesis. Functionally, acyltransferase; part of the gene cluster that mediates the biosynthesis of monakolin K, also known as lovastatin, and which acts as a potent competitive inhibitor of HMG-CoA reductase. Monakolin K biosynthesis is performed in two stages. The first stage is catalyzed by the nonaketide synthase mokA, which belongs to type I polyketide synthases and catalyzes the iterative nine-step formation of the polyketide. This PKS stage is completed by the action of dehydrogenase mokE, which catalyzes the NADPH-dependent reduction of the unsaturated tetra-, penta- and heptaketide intermediates that arise during the mokA-mediated biosynthesis of the nonaketide chain and leads to dihydromonacolin L. Covalently bound dihydromonacolin L is released from mokA by the mokD esterase. Conversion of dihydromonacolin L into monacolin L and then monacolin J is subsequently performed with the participation of molecular oxygen and P450 monoogygenase mokC. Finally, mokF performs the conversion of monacoline J to monacoline K through the addition of the side-chain diketide moiety (2R)-2-methylbutanoate produced by the diketide synthase mokB. The protein is Acyltransferase mokF of Monascus pilosus (Red mold).